A 414-amino-acid chain; its full sequence is EQQRYLNATKYIKLVIVADNVMVRKYTHNLIDIRKRIFEIVNILSLIYLSMNINVALVGVDIWTNGDKINVTSAVEPTLASFGTWRERDLLNRKTHDNAQLLTGINLNGDTVGYAYIGSMCMPKQSVGIVQDHGKTYHLVAVTMAHELGHNLGMDHDRDSCTCLANSCIMSATISPSYQFSDCSQNDHLRYLISHTPQCILNEPLRTDIVSPEVCGNYLLEEGEECDCGPLWNCQNPCCNAATCKLTPGAQCAEGLCCYQCRFIKAGNVCRPPRSECDIAESCTGQSAHCPTDRFHRNGQPCLNNHGYCYNGNCPIMLYQCIALFGAGTTVAEDVCFNYNLDGQGFFYCRRENDRIFPCAKEDVKCGRLYCKVYNDNVHPCRYQYLDNGMVDHGTKCAVGKVCSNRQCVDVNTP.

Asn-7 and Asn-70 each carry an N-linked (GlcNAc...) asparagine glycan. Residues 10–204 (KYIKLVIVAD…HTPQCILNEP (195 aa)) enclose the Peptidase M12B domain. Cystine bridges form between Cys-121/Cys-199, Cys-161/Cys-183, and Cys-163/Cys-168. His-146 serves as a coordination point for Zn(2+). Residue Glu-147 is part of the active site. Zn(2+)-binding residues include His-150 and His-156. The region spanning 212–298 (PEVCGNYLLE…HCPTDRFHRN (87 aa)) is the Disintegrin domain. Val-214, Asn-217, Glu-221, Glu-224, and Asp-227 together coordinate Ca(2+). 14 disulfides stabilise this stretch: Cys-215–Cys-244, Cys-226–Cys-239, Cys-228–Cys-234, Cys-238–Cys-261, Cys-252–Cys-258, Cys-257–Cys-283, Cys-270–Cys-290, Cys-277–Cys-309, Cys-302–Cys-314, Cys-321–Cys-371, Cys-336–Cys-381, Cys-349–Cys-359, Cys-366–Cys-403, and Cys-397–Cys-408. Positions 276–278 (ECD) match the D/ECD-tripeptide motif. Ca(2+) contacts are provided by Asp-278, Glu-281, Asp-293, and Arg-294.

This sequence belongs to the venom metalloproteinase (M12B) family. P-III subfamily. P-IIIa sub-subfamily. Monomer. Requires Zn(2+) as cofactor. As to expression, expressed by the venom gland.

The protein localises to the secreted. In terms of biological role, snake venom zinc metalloprotease that induces apoptosis in vascular endothelial cells (VEC), without degrading the extracellular matrix (it cannot cleave collagen) or inhibiting adhesion of VEC. Has also fibrinogenolytic and hemorrhagic activities. This is Zinc metalloproteinase-disintegrin-like batroxstatin-3 from Bothrops atrox (Barba amarilla).